The sequence spans 244 residues: 3-oxoacyl-[acyl-carrier-protein] reductase FabG (244 aa).

NADP(+) is bound by residues 9–12 (GASR), 60–61 (NV), and N87. Residue S139 coordinates substrate. The Proton acceptor role is filled by Y152. NADP(+) is bound by residues 152–156 (YVATK) and I185.

The protein belongs to the short-chain dehydrogenases/reductases (SDR) family. As to quaternary structure, homotetramer.

It catalyses the reaction a (3R)-hydroxyacyl-[ACP] + NADP(+) = a 3-oxoacyl-[ACP] + NADPH + H(+). It participates in lipid metabolism; fatty acid biosynthesis. Its function is as follows. Catalyzes the NADPH-dependent reduction of beta-ketoacyl-ACP substrates to beta-hydroxyacyl-ACP products, the first reductive step in the elongation cycle of fatty acid biosynthesis. This is 3-oxoacyl-[acyl-carrier-protein] reductase FabG (fabG) from Staphylococcus epidermidis (strain ATCC 35984 / DSM 28319 / BCRC 17069 / CCUG 31568 / BM 3577 / RP62A).